A 278-amino-acid polypeptide reads, in one-letter code: Imidazole glycerol phosphate synthase subunit HisF (278 aa).

Catalysis depends on residues aspartate 11 and aspartate 130.

Belongs to the HisA/HisF family. As to quaternary structure, heterodimer of HisH and HisF.

It is found in the cytoplasm. It catalyses the reaction 5-[(5-phospho-1-deoxy-D-ribulos-1-ylimino)methylamino]-1-(5-phospho-beta-D-ribosyl)imidazole-4-carboxamide + L-glutamine = D-erythro-1-(imidazol-4-yl)glycerol 3-phosphate + 5-amino-1-(5-phospho-beta-D-ribosyl)imidazole-4-carboxamide + L-glutamate + H(+). It functions in the pathway amino-acid biosynthesis; L-histidine biosynthesis; L-histidine from 5-phospho-alpha-D-ribose 1-diphosphate: step 5/9. IGPS catalyzes the conversion of PRFAR and glutamine to IGP, AICAR and glutamate. The HisF subunit catalyzes the cyclization activity that produces IGP and AICAR from PRFAR using the ammonia provided by the HisH subunit. The protein is Imidazole glycerol phosphate synthase subunit HisF of Thermodesulfovibrio yellowstonii (strain ATCC 51303 / DSM 11347 / YP87).